A 347-amino-acid chain; its full sequence is Large ribosomal subunit protein uL10 (347 aa).

A disordered region spans residues 312-347; that stretch reads AAAPAEEEVKKEEEPEEEEEDHAEEDGMAGLGALFG. Residues 325–338 are compositionally biased toward acidic residues; it reads EPEEEEEDHAEEDG.

The protein belongs to the universal ribosomal protein uL10 family. Part of the 50S ribosomal subunit. Forms part of the ribosomal stalk which helps the ribosome interact with GTP-bound translation factors. Forms a heptameric L10(L12)2(L12)2(L12)2 complex, where L10 forms an elongated spine to which the L12 dimers bind in a sequential fashion.

Its function is as follows. Forms part of the ribosomal stalk, playing a central role in the interaction of the ribosome with GTP-bound translation factors. In Methanosarcina acetivorans (strain ATCC 35395 / DSM 2834 / JCM 12185 / C2A), this protein is Large ribosomal subunit protein uL10.